A 273-amino-acid polypeptide reads, in one-letter code: Probable ribosomal RNA small subunit methyltransferase A (273 aa).

S-adenosyl-L-methionine-binding residues include Asn-23, Leu-25, Gly-50, Glu-71, Asp-95, and Asn-110.

This sequence belongs to the class I-like SAM-binding methyltransferase superfamily. rRNA adenine N(6)-methyltransferase family. RsmA subfamily.

The protein resides in the cytoplasm. In terms of biological role, specifically dimethylates two adjacent adenosines in the loop of a conserved hairpin near the 3'-end of 16S rRNA in the 30S particle. May play a critical role in biogenesis of 30S subunits. The sequence is that of Probable ribosomal RNA small subunit methyltransferase A from Pyrococcus furiosus (strain ATCC 43587 / DSM 3638 / JCM 8422 / Vc1).